The chain runs to 1172 residues: MLMSRTDSKSGKNRSGVRMFKDGDFLTPASGESWDRLRLTCSQPFTRHQSFGLAFLRVRSSLGSLADPVVDPSAPGSSGLNQNSTDVLESDPRPWLTNPSIRRTFFPDPQTSTKEISELKGMLKQLQPGPLGRAARMVLSAARKAPPASVVSPNNSHGEPGPSRAESAEPRAEEPNRKTAVGRRKRRKVQEPRRSLSNSSSQPNRRTGRTRQRQHRPQTKSDDGGVQAAGQCPICAGFFSIETLPQHAATCGESPPPQPASPASLSSSESVLRRHHVALTPVPLVPKPQPNWTEIVNKKLKFPPTLLRAIQEGQLGLVQQLLESSSDASGAGPGGPLRNVEESEDRSWREALNLAIRLGHEVITDVLLANVKFDFRQIHEALLVAVDTNQPAVVRRLLARLEREKGRKVDTKSFSLAFFDSSIDGSRFAPGVTPLTLACQKDLYEIAQLLMDQGHTIARPHPVSCACLECSNARRYDLLKFSLSRINTYRGIASRAHLSLASEDAMLAAFQLSRELRRLARKEPEFKPQYIALESLCQDYGFELLGMCRNQSEVTAVLNDLGEDSETEPEAEGLGQAFEEGIPNLARLRLAVNYNQKQFVAHPICQQVLSSIWCGNLAGWRGSTTIWKLFVAFLIFLTMPFLCIGYWLAPKSQLGRLLKIPVLKFLLHSASYLWFLIFLLGESLVMETQLSTFKGRSQSVWETSLHMIWVTGFLWFECKEVWIEGLRSYLLDWWNFLDVVILSLYLASFALRLLLAGLAYMHCRDASDSTTCRYFTTAERSEWRTEDPQFLAEVLFAVTSMLSFTRLAYILPAHESLGTLQISIGKMIDDMIRFMFILMIILTAFLCGLNNIYVPYQESEKLGNFNETFQFLFWTMFGMEEHTVVDMPQFLVPEFVGRAMYGIFTIVMVIVLLNMLIAMITNSFQKIEDDADVEWKFARSKLYLSYFREGLTLPVPFNILPSPKAAFYLVRRIFRFLCCGSSCCKAKKSDYPPIGTFTNPGARAGSAGEGERVSYRLRVIKALVQRYIETARREFEETRRKDLGNRLTELTKTVSRLQSEVASVQKNLAAGGAPRPPDGASILSRYITRVRNSFQNLGPPTSDTPAELTMPGIVETEVSLGDGLDGTGEAGAPAPGEPGSSSSAHVLVHREQEAEGSGDLLLEGDLETKGES.

Residues 1 to 10 (MLMSRTDSKS) are compositionally biased toward basic and acidic residues. Disordered regions lie at residues 1–22 (MLMSRTDSKSGKNRSGVRMFKD), 69–98 (VVDPSAPGSSGLNQNSTDVLESDPRPWLTN), 140–227 (SAAR…GGVQ), and 249–271 (ATCGESPPPQPASPASLSSSESV). The Cytoplasmic segment spans residues 1 to 659 (MLMSRTDSKS…PKSQLGRLLK (659 aa)). The span at 75-87 (PGSSGLNQNSTDV) shows a compositional bias: polar residues. Residues 166 to 177 (ESAEPRAEEPNR) show a composition bias toward basic and acidic residues. Polar residues predominate over residues 195 to 204 (SLSNSSSQPN). Over residues 206–218 (RTGRTRQRQHRPQ) the composition is skewed to basic residues. Residues 261-270 (SPASLSSSES) are compositionally biased toward low complexity. ANK repeat units follow at residues 301-330 (KFPPTLLRAIQEGQLGLVQQLLESSSDASG), 377-406 (QIHEALLVAVDTNQPAVVRRLLARLEREKG), and 430-459 (PGVTPLTLACQKDLYEIAQLLMDQGHTIAR). A helical membrane pass occupies residues 660 to 680 (IPVLKFLLHSASYLWFLIFLL). Topologically, residues 681 to 702 (GESLVMETQLSTFKGRSQSVWE) are extracellular. Residues 703-723 (TSLHMIWVTGFLWFECKEVWI) form a helical membrane-spanning segment. Residues 724-738 (EGLRSYLLDWWNFLD) lie on the Cytoplasmic side of the membrane. The chain crosses the membrane as a helical span at residues 739–759 (VVILSLYLASFALRLLLAGLA). At 760-789 (YMHCRDASDSTTCRYFTTAERSEWRTEDPQ) the chain is on the extracellular side. A helical membrane pass occupies residues 790-810 (FLAEVLFAVTSMLSFTRLAYI). Topologically, residues 811-833 (LPAHESLGTLQISIGKMIDDMIR) are cytoplasmic. The chain crosses the membrane as a helical span at residues 834–854 (FMFILMIILTAFLCGLNNIYV). The Extracellular portion of the chain corresponds to 855 to 899 (PYQESEKLGNFNETFQFLFWTMFGMEEHTVVDMPQFLVPEFVGRA). A helical transmembrane segment spans residues 900–920 (MYGIFTIVMVIVLLNMLIAMI). The Cytoplasmic portion of the chain corresponds to 921 to 1172 (TNSFQKIEDD…EGDLETKGES (252 aa)). The tract at residues 1118–1172 (VSLGDGLDGTGEAGAPAPGEPGSSSSAHVLVHREQEAEGSGDLLLEGDLETKGES) is disordered. Residues 1130-1144 (AGAPAPGEPGSSSSA) show a composition bias toward low complexity.

The protein belongs to the transient receptor (TC 1.A.4) family. STrpC subfamily. TRPC2 sub-subfamily. Isoform 3 is ubiquitously expressed at low levels. Isoform 4 is expressed exclusively in vomeronasal organ.

It localises to the membrane. Functionally, thought to form a receptor-activated non-selective calcium permeant cation channel. Probably is operated by a phosphatidylinositol second messenger system activated by receptor tyrosine kinases or G-protein coupled receptors. May also be activated by intracellular calcium store depletion. Plays a role in mediating responsivity to pheromones that elicit aggressive and mating behaviors. Required for response to the Esp1 pheromone which enhances female sexual receptive behavior and to the Esp22 pheromone which inhibits adult male mating behavior. The protein is Short transient receptor potential channel 2 (Trpc2) of Mus musculus (Mouse).